Reading from the N-terminus, the 161-residue chain is Phosphopantetheine adenylyltransferase (161 aa).

T10 provides a ligand contact to substrate. Residues 10–11 and H18 each bind ATP; that span reads TF. 3 residues coordinate substrate: K42, L75, and R89. Residues 90–92, E100, and 125–131 each bind ATP; these read GLR and YSFLSSS.

The protein belongs to the bacterial CoaD family. In terms of assembly, homohexamer. Requires Mg(2+) as cofactor.

Its subcellular location is the cytoplasm. It catalyses the reaction (R)-4'-phosphopantetheine + ATP + H(+) = 3'-dephospho-CoA + diphosphate. It participates in cofactor biosynthesis; coenzyme A biosynthesis; CoA from (R)-pantothenate: step 4/5. In terms of biological role, reversibly transfers an adenylyl group from ATP to 4'-phosphopantetheine, yielding dephospho-CoA (dPCoA) and pyrophosphate. In Thermodesulfovibrio yellowstonii (strain ATCC 51303 / DSM 11347 / YP87), this protein is Phosphopantetheine adenylyltransferase.